Here is a 1070-residue protein sequence, read N- to C-terminus: uncharacterized protein (1070 aa).

Disordered stretches follow at residues 66–88, 355–388, 423–483, 667–692, and 735–786; these read EKEKETNNENTSNVNKIKSPGLE, DLDFSNVRNKNKEDDMDFSNVRNKKKEDDMDFSN, EDDL…EQID, EELKNDISSETTKEEKNTEHKKEETE, and SKTQ…NNNN. The segment covering 73–83 has biased composition (low complexity); the sequence is NENTSNVNKIK. Composition is skewed to basic and acidic residues over residues 435–460 and 474–483; these read KKEESKENDTNKSEKPLYLRRLEEYR and MKMHEKEQID. A coiled-coil region spans residues 475–736; sequence KMHEKEQIDD…EMRLQLIRSK (262 aa). Over residues 735–745 the composition is skewed to polar residues; that stretch reads SKTQGTSSTFI. Residues 751 to 765 show a composition bias toward basic and acidic residues; the sequence is KHLESLKEEKKKEVK. The span at 773 to 786 shows a compositional bias: low complexity; sequence NNNNNNNNNNNNNN.

This is an uncharacterized protein from Plasmodium falciparum (isolate 3D7).